The sequence spans 340 residues: Phosphoribosylformylglycinamidine cyclo-ligase (340 aa).

Belongs to the AIR synthase family.

It localises to the cytoplasm. It catalyses the reaction 2-formamido-N(1)-(5-O-phospho-beta-D-ribosyl)acetamidine + ATP = 5-amino-1-(5-phospho-beta-D-ribosyl)imidazole + ADP + phosphate + H(+). It functions in the pathway purine metabolism; IMP biosynthesis via de novo pathway; 5-amino-1-(5-phospho-D-ribosyl)imidazole from N(2)-formyl-N(1)-(5-phospho-D-ribosyl)glycinamide: step 2/2. This chain is Phosphoribosylformylglycinamidine cyclo-ligase, found in Streptococcus agalactiae serotype III (strain NEM316).